Here is a 747-residue protein sequence, read N- to C-terminus: Phenylalanine ammonia-lyase 2 (747 aa).

Residues 1–20 (MTILSGTTAAPRVNGTTMNG) are compositionally biased toward polar residues. The segment at 1–47 (MTILSGTTAAPRVNGTTMNGHSKPHTNGVHLNGHAPKATTESPWPQS) is disordered. Catalysis depends on Tyr124, which acts as the Proton donor/acceptor. The 5-imidazolinone (Ala-Gly) cross-link spans 229 to 231 (ASG). A 2,3-didehydroalanine (Ser) modification is found at Ser230. The (E)-cinnamate site is built by Asn290, Gln380, Arg386, Asn416, Lys487, Glu515, and Asn518.

It belongs to the PAL/histidase family. In terms of assembly, homotetramer. Post-translationally, contains an active site 4-methylidene-imidazol-5-one (MIO), which is formed autocatalytically by cyclization and dehydration of residues Ala-Ser-Gly.

It localises to the cytoplasm. It carries out the reaction L-phenylalanine = (E)-cinnamate + NH4(+). Its pathway is phenylpropanoid metabolism; trans-cinnamate biosynthesis; trans-cinnamate from L-phenylalanine: step 1/1. In terms of biological role, catalyzes the non-oxidative deamination of L-phenylalanine to form trans-cinnamic acid and a free ammonium ion. Facilitates the commitment step in phenylpropanoid pathways that produce secondary metabolites such as lignins, coumarins and flavonoids. The chain is Phenylalanine ammonia-lyase 2 from Pleurotus ostreatus (Oyster mushroom).